The chain runs to 504 residues: Zinc finger CCCH-type with G patch domain-containing protein (504 aa).

The interval 95–121 is disordered; the sequence is LSEDSNEVKPNPDTDEENEEEEQDISG. Positions 107–118 are enriched in acidic residues; that stretch reads DTDEENEEEEQD. Residues 165–191 form a C3H1-type zinc finger; sequence KSMKPCGFYLEGKCRFMDNCRYSHGEV. In terms of domain architecture, G-patch spans 308–354; it reads TRGIGSKLLMKMGYELGKGLGKTLSGRVEPVQAVVLPKGHSLDICAE.

The protein localises to the nucleus. Transcription repressor that specifically binds the 5'-GGAG[GA]A[GA]A-3' consensus sequence. Represses transcription by recruiting the chromatin multiprotein complex NuRD to target promoters. Negatively regulates expression of EGFR, a gene involved in cell proliferation, survival and migration. In Danio rerio (Zebrafish), this protein is Zinc finger CCCH-type with G patch domain-containing protein (zgpat).